The following is a 437-amino-acid chain: Membrane protein NfeD1b (437 aa).

The next 5 membrane-spanning stretches (helical) occupy residues 2–22, 231–251, 253–273, 288–308, and 316–336; these read LQIK…LLGV, WLTN…GLTV, LFSP…LLFF, LLFI…GGII, and IIAS…SLLI.

Belongs to the NfeD family.

It localises to the cell membrane. This is Membrane protein NfeD1b from Bacillus subtilis (strain 168).